Consider the following 465-residue polypeptide: Ran-binding protein 3-like (465 aa).

Positions 276-417 constitute a RanBD1 domain; the sequence is SQPSRKCLLE…ALQSFNKQRD (142 aa).

Interacts with SMAD1, SMAD5 and SMAD8; the interaction (with SMAD at least) increases when SMAD1 is not phosphorylated and mediates SMAD1 nuclear export.

The protein localises to the nucleus. Its subcellular location is the cytoplasm. Nuclear export factor for BMP-specific SMAD1/5/8 that plays a critical role in terminating BMP signaling and regulating mesenchymal stem cell differentiation by blocking osteoblast differentiation to promote myogenic differention. Directly recognizes dephosphorylated SMAD1/5/8 and mediates their nuclear export in a Ran-dependent manner. This Homo sapiens (Human) protein is Ran-binding protein 3-like (RANBP3L).